Here is a 227-residue protein sequence, read N- to C-terminus: Cytochrome c oxidase subunit 2 (227 aa).

At 1-14 (MAYPFQLGLQDATS) the chain is on the mitochondrial intermembrane side. A helical membrane pass occupies residues 15–45 (PIMEELMNFHDHTLMIVFLISTLVLYIISLM). Residues 46–59 (LTTKLTHTSTMDAQ) lie on the Mitochondrial matrix side of the membrane. The chain crosses the membrane as a helical span at residues 60 to 87 (EVETIWTILPAVILILIALPSLRILYMM). Over 88 to 227 (DEINNPALTV…YFENWSASMI (140 aa)) the chain is Mitochondrial intermembrane. The Cu cation site is built by His161, Cys196, Glu198, Cys200, His204, and Met207. Residue Glu198 participates in Mg(2+) binding. The residue at position 218 (Tyr218) is a Phosphotyrosine.

It belongs to the cytochrome c oxidase subunit 2 family. As to quaternary structure, component of the cytochrome c oxidase (complex IV, CIV), a multisubunit enzyme composed of 14 subunits. The complex is composed of a catalytic core of 3 subunits MT-CO1, MT-CO2 and MT-CO3, encoded in the mitochondrial DNA, and 11 supernumerary subunits COX4I, COX5A, COX5B, COX6A, COX6B, COX6C, COX7A, COX7B, COX7C, COX8 and NDUFA4, which are encoded in the nuclear genome. The complex exists as a monomer or a dimer and forms supercomplexes (SCs) in the inner mitochondrial membrane with NADH-ubiquinone oxidoreductase (complex I, CI) and ubiquinol-cytochrome c oxidoreductase (cytochrome b-c1 complex, complex III, CIII), resulting in different assemblies (supercomplex SCI(1)III(2)IV(1) and megacomplex MCI(2)III(2)IV(2)). Found in a complex with TMEM177, COA6, COX18, COX20, SCO1 and SCO2. Interacts with TMEM177 in a COX20-dependent manner. Interacts with COX20. Interacts with COX16. Cu cation is required as a cofactor.

The protein localises to the mitochondrion inner membrane. It catalyses the reaction 4 Fe(II)-[cytochrome c] + O2 + 8 H(+)(in) = 4 Fe(III)-[cytochrome c] + 2 H2O + 4 H(+)(out). Component of the cytochrome c oxidase, the last enzyme in the mitochondrial electron transport chain which drives oxidative phosphorylation. The respiratory chain contains 3 multisubunit complexes succinate dehydrogenase (complex II, CII), ubiquinol-cytochrome c oxidoreductase (cytochrome b-c1 complex, complex III, CIII) and cytochrome c oxidase (complex IV, CIV), that cooperate to transfer electrons derived from NADH and succinate to molecular oxygen, creating an electrochemical gradient over the inner membrane that drives transmembrane transport and the ATP synthase. Cytochrome c oxidase is the component of the respiratory chain that catalyzes the reduction of oxygen to water. Electrons originating from reduced cytochrome c in the intermembrane space (IMS) are transferred via the dinuclear copper A center (CU(A)) of subunit 2 and heme A of subunit 1 to the active site in subunit 1, a binuclear center (BNC) formed by heme A3 and copper B (CU(B)). The BNC reduces molecular oxygen to 2 water molecules using 4 electrons from cytochrome c in the IMS and 4 protons from the mitochondrial matrix. The chain is Cytochrome c oxidase subunit 2 (MT-CO2) from Maxomys surifer (Indomalayan maxomys).